Here is a 150-residue protein sequence, read N- to C-terminus: Small ribosomal subunit protein uS15 (150 aa).

The span at methionine 1–glycine 10 shows a compositional bias: basic residues. A disordered region spans residues methionine 1–threonine 21.

Belongs to the universal ribosomal protein uS15 family. Part of the 30S ribosomal subunit.

The polypeptide is Small ribosomal subunit protein uS15 (Caldivirga maquilingensis (strain ATCC 700844 / DSM 13496 / JCM 10307 / IC-167)).